We begin with the raw amino-acid sequence, 713 residues long: Putative ERAD-associated E3 ubiquitin-protein ligase component (713 aa).

A signal peptide spans 1–20 (MQLLNFLICLFFIFKRCVFT). N-linked (GlcNAc...) asparagine glycosylation is found at asparagine 48 and asparagine 123. 2 Sel1-like repeats span residues 83-124 (PESQ…TQNY) and 125-160 (TYALLALAYKHLNGLSTPMSVDKGVELYKQVAHQIS). Asparagine 211 carries N-linked (GlcNAc...) asparagine glycosylation. Sel1-like repeat units lie at residues 212-248 (ISAHISLATIYQYGTPGKLKDIKLAVKHYLAAIRLVN), 280-315 (SIAAFRLGCMALHGELGKPDPSLAYAWFEYGVSLNH), 490-525 (IHSLIKIGDFYRMGLGTSAKPELAFSYYSQAAAIHP), and 527-562 (ALAYWRLGWMHEYGVGVPVDFEMAKKNYDNALMHDT). N-linked (GlcNAc...) asparagine glycosylation occurs at asparagine 314. Positions 621–655 (QLPPEPPTLQVDRTPQQPDPQETSESLPSPNTEEM) are disordered. Polar residues predominate over residues 631–652 (VDRTPQQPDPQETSESLPSPNT). A helical transmembrane segment spans residues 671–691 (GRFLETACVTLIVVVVGLVLM).

This sequence belongs to the sel-1 family.

The protein resides in the endoplasmic reticulum membrane. Component of the endoplasmic reticulum quality control (ERQC) system involved in ubiquitin-dependent degradation of missfolded endoplasmic reticulum proteins. This is Putative ERAD-associated E3 ubiquitin-protein ligase component from Schizosaccharomyces pombe (strain 972 / ATCC 24843) (Fission yeast).